A 193-amino-acid chain; its full sequence is uncharacterized protein (193 aa).

This is an uncharacterized protein from Saccharomyces cerevisiae (strain ATCC 204508 / S288c) (Baker's yeast).